A 516-amino-acid chain; its full sequence is Oxysterol-binding protein-like protein 1 (516 aa).

Disordered regions lie at residues 168–240 and 459–501; these read PLGK…SQKS and KQEI…EEGK. The span at 178–187 shows a compositional bias: polar residues; that stretch reads SRTTSSQSVA. Serine 182 carries the phosphoserine modification. The span at 197-206 shows a compositional bias: basic residues; it reads TSKKKSSKKN. Residues 218–238 show a composition bias toward polar residues; the sequence is DRSSTAPSTAESNNEHLSSSQ.

Belongs to the OSBP family.

The protein localises to the endoplasmic reticulum. This chain is Oxysterol-binding protein-like protein 1 (obp1), found in Schizosaccharomyces pombe (strain 972 / ATCC 24843) (Fission yeast).